Consider the following 101-residue polypeptide: Small ribosomal subunit protein bS18c (101 aa).

The protein belongs to the bacterial ribosomal protein bS18 family. Part of the 30S ribosomal subunit.

The protein localises to the plastid. Its subcellular location is the chloroplast. The polypeptide is Small ribosomal subunit protein bS18c (Gossypium barbadense (Sea Island cotton)).